The following is a 1492-amino-acid chain: DNA polymerase alpha catalytic subunit (1492 aa).

3 disordered regions span residues 34–112 (DFIV…VEQS), 162–195 (SVTL…DVNP), and 210–234 (ANSY…EMAN). Residues 42–55 (YGYRDHGGEIWDRD) are compositionally biased toward basic and acidic residues. Residues 93–105 (NAASTNPSAQQKP) are compositionally biased toward polar residues. Over residues 166 to 178 (ESREEQERRRQSE) the composition is skewed to basic and acidic residues. Composition is skewed to polar residues over residues 184 to 194 (ANIGQNQSDVN) and 210 to 224 (ANSY…SVSK). Positions 1314, 1317, 1341, 1344, 1375, 1380, 1393, and 1398 each coordinate Zn(2+). A CysA-type zinc finger spans residues 1314-1344 (CPHCAHNYHFPGILVPSSNNTELTGLACVKC). The short motif at 1375 to 1398 (CKEPQCGMKTNQLLLNNKCIVKGC) is the CysB motif element.

Belongs to the DNA polymerase type-B family.

Its subcellular location is the nucleus. It catalyses the reaction DNA(n) + a 2'-deoxyribonucleoside 5'-triphosphate = DNA(n+1) + diphosphate. Its function is as follows. Polymerase alpha in a complex with DNA primase is a replicative polymerase. The sequence is that of DNA polymerase alpha catalytic subunit from Sterkiella nova (Ciliate).